The chain runs to 217 residues: Glycerol-3-phosphate acyltransferase (217 aa).

6 consecutive transmembrane segments (helical) span residues I3–G23, V56–L76, G78–A98, F120–L140, S142–A162, and I163–F183.

The protein belongs to the PlsY family. As to quaternary structure, probably interacts with PlsX.

The protein resides in the cell membrane. The catalysed reaction is an acyl phosphate + sn-glycerol 3-phosphate = a 1-acyl-sn-glycero-3-phosphate + phosphate. It participates in lipid metabolism; phospholipid metabolism. Its function is as follows. Catalyzes the transfer of an acyl group from acyl-phosphate (acyl-PO(4)) to glycerol-3-phosphate (G3P) to form lysophosphatidic acid (LPA). This enzyme utilizes acyl-phosphate as fatty acyl donor, but not acyl-CoA or acyl-ACP. This chain is Glycerol-3-phosphate acyltransferase, found in Enterococcus faecalis (strain ATCC 700802 / V583).